The chain runs to 486 residues: Siroheme synthase (486 aa).

Positions Met1–Val204 are precorrin-2 dehydrogenase /sirohydrochlorin ferrochelatase. NAD(+) is bound by residues His22 to Val23 and Glu43 to Lys44. Residue Ser128 is modified to Phosphoserine. The uroporphyrinogen-III C-methyltransferase stretch occupies residues Gly216 to Ala486. Pro225 is a binding site for S-adenosyl-L-methionine. The active-site Proton acceptor is the Asp248. The active-site Proton donor is the Lys270. S-adenosyl-L-methionine-binding positions include Gly301–Asp303, Val306, Thr331–Ala332, Met383, and Gly412.

It in the N-terminal section; belongs to the precorrin-2 dehydrogenase / sirohydrochlorin ferrochelatase family. In the C-terminal section; belongs to the precorrin methyltransferase family.

The catalysed reaction is uroporphyrinogen III + 2 S-adenosyl-L-methionine = precorrin-2 + 2 S-adenosyl-L-homocysteine + H(+). The enzyme catalyses precorrin-2 + NAD(+) = sirohydrochlorin + NADH + 2 H(+). It catalyses the reaction siroheme + 2 H(+) = sirohydrochlorin + Fe(2+). Its pathway is cofactor biosynthesis; adenosylcobalamin biosynthesis; precorrin-2 from uroporphyrinogen III: step 1/1. It functions in the pathway cofactor biosynthesis; adenosylcobalamin biosynthesis; sirohydrochlorin from precorrin-2: step 1/1. The protein operates within porphyrin-containing compound metabolism; siroheme biosynthesis; precorrin-2 from uroporphyrinogen III: step 1/1. It participates in porphyrin-containing compound metabolism; siroheme biosynthesis; siroheme from sirohydrochlorin: step 1/1. Its pathway is porphyrin-containing compound metabolism; siroheme biosynthesis; sirohydrochlorin from precorrin-2: step 1/1. In terms of biological role, multifunctional enzyme that catalyzes the SAM-dependent methylations of uroporphyrinogen III at position C-2 and C-7 to form precorrin-2 via precorrin-1. Then it catalyzes the NAD-dependent ring dehydrogenation of precorrin-2 to yield sirohydrochlorin. Finally, it catalyzes the ferrochelation of sirohydrochlorin to yield siroheme. The sequence is that of Siroheme synthase from Actinobacillus pleuropneumoniae serotype 7 (strain AP76).